The sequence spans 345 residues: UPF0324 membrane protein Cgl0015/cg0018 (345 aa).

Transmembrane regions (helical) follow at residues 15 to 37 (LRTG…VLIA), 44 to 66 (FSGV…LIQL), 81 to 103 (LLRL…SLGF), 105 to 124 (MLAV…ILMG), 134 to 156 (VLLI…EGVT), 163 to 185 (VVTA…PFAT), 205 to 227 (EIAQ…AVVV), 261 to 280 (VVPL…STVA), 285 to 307 (VIAA…LGCG), and 320 to 342 (PFIL…TLLT).

This sequence belongs to the UPF0324 family.

Its subcellular location is the cell membrane. This Corynebacterium glutamicum (strain ATCC 13032 / DSM 20300 / JCM 1318 / BCRC 11384 / CCUG 27702 / LMG 3730 / NBRC 12168 / NCIMB 10025 / NRRL B-2784 / 534) protein is UPF0324 membrane protein Cgl0015/cg0018.